Consider the following 183-residue polypeptide: dCTP deaminase, dUMP-forming (183 aa).

DCTP contacts are provided by residues 99–104, Asp117, 125–127, Gln146, Tyr159, Lys166, and Gln170; these read KSSIAR and TLE. Glu127 serves as the catalytic Proton donor/acceptor.

This sequence belongs to the dCTP deaminase family. As to quaternary structure, homotrimer.

It catalyses the reaction dCTP + 2 H2O = dUMP + NH4(+) + diphosphate. The protein operates within pyrimidine metabolism; dUMP biosynthesis; dUMP from dCTP: step 1/1. Functionally, bifunctional enzyme that catalyzes both the deamination of dCTP to dUTP and the hydrolysis of dUTP to dUMP without releasing the toxic dUTP intermediate. The chain is dCTP deaminase, dUMP-forming from Methanoregula boonei (strain DSM 21154 / JCM 14090 / 6A8).